The sequence spans 732 residues: uncharacterized protein (732 aa).

Residues 145-207 form a disordered region; it reads ETLRDSVINP…RRRPEMASPH (63 aa). Positions 170-179 are enriched in basic and acidic residues; sequence KGHETLERGS. The Reverse transcriptase domain occupies 176 to 524; sequence ERGSKALGPE…KKIPFLGYLI (349 aa).

It is found in the mitochondrion. This is an uncharacterized protein from Marchantia polymorpha (Common liverwort).